Consider the following 219-residue polypeptide: Uracil-DNA glycosylase (219 aa).

The Proton acceptor role is filled by aspartate 64.

This sequence belongs to the uracil-DNA glycosylase (UDG) superfamily. UNG family.

It localises to the cytoplasm. The catalysed reaction is Hydrolyzes single-stranded DNA or mismatched double-stranded DNA and polynucleotides, releasing free uracil.. In terms of biological role, excises uracil residues from the DNA which can arise as a result of misincorporation of dUMP residues by DNA polymerase or due to deamination of cytosine. This Leuconostoc citreum (strain KM20) protein is Uracil-DNA glycosylase.